The primary structure comprises 478 residues: MAERIAASLLPAASPSPAPSPPPPRPRVSAAAAASFPCCSTSAGGLRLRSRPSRFPQKAATTRSGRAGAGARAVVRCMAAAAVAASDAAQLKSAREDIREILKTTYCHPIMVRLGWHDSGTYDKNIEEWPQRGGADGSLRFDAELSHGANAGLINALKLIQPIKDKYPGITYADLFQLASATAIEEAGGPKIPMKYGRVDVTAAEQCPPEGRLPDAGPRVPADHLREVFYRMGLDDKEIVALSGAHTLGRSRPDRSGWGKPETKYTKDGPGEPGGQSWTVEWLKFDNSYFKDIKEQRDQDLLVLPTDAALFEDPSFKVYAEKYAEDQEAFFKDYAEAHAKLSDLGAKFDPPEGFSLDDEPAVEEKDPEPAPAPAAAPPPPPVEEKKEAEPTPVPVTVGAAVASSPADDNNGAAPQPEPFVAAKYSYGKKELSDSMKQKIRAEYEGFGGSPDKPLQSNYFLNIMLLIGGLAFLTSLLGS.

A compositionally biased stretch (low complexity) spans 1–13; the sequence is MAERIAASLLPAA. 2 disordered regions span residues 1-31 and 44-66; these read MAER…VSAA and GGLR…RSGR. A chloroplast-targeting transit peptide spans 1-76; sequence MAERIAASLL…AGAGARAVVR (76 aa). Residues 14 to 26 show a composition bias toward pro residues; sequence SPSPAPSPPPPRP. The active-site Proton acceptor is the histidine 117. Positions 245–276 are disordered; the sequence is AHTLGRSRPDRSGWGKPETKYTKDGPGEPGGQ. Histidine 246 is a heme b binding site. A K(+)-binding site is contributed by threonine 247. Residues 251–270 show a composition bias toward basic and acidic residues; that stretch reads SRPDRSGWGKPETKYTKDGP. K(+) contacts are provided by threonine 279 and aspartate 286. The interval 346-417 is disordered; it reads AKFDPPEGFS…DNNGAAPQPE (72 aa). Positions 369–381 are enriched in pro residues; the sequence is PAPAPAAAPPPPP. Residues 394–406 show a composition bias toward low complexity; that stretch reads PVTVGAAVASSPA. Residues 458–478 traverse the membrane as a helical segment; that stretch reads YFLNIMLLIGGLAFLTSLLGS.

Belongs to the peroxidase family. Ascorbate peroxidase subfamily. Interacts with SWEET11/OS8N3. Heme b serves as cofactor. In terms of tissue distribution, expressed in roots, leaves, stems and flowers. Expressed in leaves, shoots and panicles. Expressed at low levels in roots.

The protein localises to the plastid. It localises to the chloroplast thylakoid membrane. It catalyses the reaction L-ascorbate + H2O2 = L-dehydroascorbate + 2 H2O. In terms of biological role, involved in defense response and tolerance to the bacterial pathogen Xanthomonas oryzae pv. oryzae (Xoo). Plays an important role in hydrogen peroxide removal during infection by Xoo. Involved in response to abiotic stress. Plays a role in hydrogen peroxide removal durings salt stress. This Oryza sativa subsp. japonica (Rice) protein is Probable L-ascorbate peroxidase 8, chloroplastic.